The chain runs to 734 residues: ATP-dependent RNA helicase SUV3L, mitochondrial (734 aa).

A mitochondrion-targeting transit peptide spans 1-60 (MAAAAAIAAALLRRSTSSQHHRRILLLPLLSHLQRAAPRSPSPWDPPPHHRFFFSSDVTA). A disordered region spans residues 58 to 88 (VTAEGDSKPRPPLDGKQLWREVSTSEPATGA). The span at 62 to 76 (GDSKPRPPLDGKQLW) shows a compositional bias: basic and acidic residues. Positions 198–356 (FARAMRRRVV…RFKPLVVEAK (159 aa)) constitute a Helicase ATP-binding domain. 211–218 (GPTNSGKT) provides a ligand contact to ATP. In terms of domain architecture, Helicase C-terminal spans 357-525 (TLLGDLKNVR…SFAIQFPDLT (169 aa)). Residues asparagine 594 and asparagine 614 are each glycosylated (N-linked (GlcNAc...) asparagine). Positions 667–734 (ASWKPTSRQQ…QDPSSLNFVA (68 aa)) are disordered. The segment covering 684 to 693 (EEDNDVEQAS) has biased composition (acidic residues). The span at 695-709 (DNAKNDSEDGYERSI) shows a compositional bias: basic and acidic residues. Asparagine 699 is a glycosylation site (N-linked (GlcNAc...) asparagine). A compositionally biased stretch (polar residues) spans 725–734 (QDPSSLNFVA).

Belongs to the helicase family. As to quaternary structure, homodimer; in free form. Component of the mitochondrial degradosome (mtEXO) complex which is a heteropentamer containing 2 copies of SUPV3L1 and 3 copies of PNPT1. Mg(2+) serves as cofactor. It depends on Mn(2+) as a cofactor.

It localises to the nucleus. It is found in the mitochondrion matrix. The protein resides in the mitochondrion nucleoid. It carries out the reaction ATP + H2O = ADP + phosphate + H(+). Functionally, major helicase player in mitochondrial RNA metabolism. Component of the mitochondrial degradosome (mtEXO) complex, that degrades 3' overhang double-stranded RNA with a 3'-to-5' directionality in an ATP-dependent manner. ATPase and ATP-dependent multisubstrate helicase, able to unwind double-stranded (ds) DNA and RNA, and RNA/DNA heteroduplexes in the 5'-to-3' direction. Plays a role in the RNA surveillance system in mitochondria; regulates the stability of mature mRNAs, the removal of aberrantly formed mRNAs and the rapid degradation of non coding processing intermediates. Confers salinity and drought stress tolerances by maintaining both photosynthesis and antioxidant machinery, probably via an increase in plant hormones levels such as gibberellic acid (GA(3)), the cytokinin zeatin (Z) and indole-3-acetic acid (IAA). The sequence is that of ATP-dependent RNA helicase SUV3L, mitochondrial from Oryza sativa subsp. japonica (Rice).